The sequence spans 175 residues: Arginine repressor (175 aa).

A disordered region spans residues 1-23; that stretch reads MSVSTPERGGAEQGKGPAIARTR.

Belongs to the ArgR family.

The protein localises to the cytoplasm. Its pathway is amino-acid biosynthesis; L-arginine biosynthesis [regulation]. Regulates arginine biosynthesis genes. This chain is Arginine repressor, found in Nocardia farcinica (strain IFM 10152).